Consider the following 146-residue polypeptide: UPF0735 ACT domain-containing protein CHY_1913 (146 aa).

Positions 70-145 (TLALNLEHRA…GVSKVELVGQ (76 aa)) constitute an ACT domain.

The protein belongs to the UPF0735 family.

The polypeptide is UPF0735 ACT domain-containing protein CHY_1913 (Carboxydothermus hydrogenoformans (strain ATCC BAA-161 / DSM 6008 / Z-2901)).